The primary structure comprises 1138 residues: Condensin-2 complex subunit G2 (1138 aa).

Phosphoserine is present on Ser-30. An HEAT repeat occupies 459 to 497 (LLPTLRYSLHDNSEKVRVAFVDLLLKIKAVRAAKFWKIC). At Thr-1114 the chain carries Phosphothreonine.

As to quaternary structure, component of the condensin-2 complex, which contains the SMC2 and SMC4 heterodimer, and 3 non SMC subunits that probably regulate the complex: NCAPH2, NCAPD3 and NCAPG2. Expressed in spleen, lung and testis as well as in hematopoietic cell lines.

It localises to the nucleus. Functionally, regulatory subunit of the condensin-2 complex, a complex which establishes mitotic chromosome architecture and is involved in physical rigidity of the chromatid axis. Is required for early embryonic development and is essential for viability and expansion of the inner cell mass (ICM) of the implanting blastocyst. This is Condensin-2 complex subunit G2 (Ncapg2) from Mus musculus (Mouse).